Reading from the N-terminus, the 420-residue chain is 5'-deoxyadenosine deaminase (420 aa).

Positions 55 and 57 each coordinate Zn(2+). Positions 84 and 176 each coordinate substrate. Residue histidine 203 coordinates Zn(2+). Substrate contacts are provided by glutamate 206 and aspartate 292. Zn(2+) is bound at residue aspartate 292.

Belongs to the metallo-dependent hydrolases superfamily. MTA/SAH deaminase family. Homotetramer. Zn(2+) serves as cofactor.

The enzyme catalyses 5'-deoxyadenosine + H2O + H(+) = 5'-deoxyinosine + NH4(+). It catalyses the reaction S-adenosyl-L-homocysteine + H2O + H(+) = S-inosyl-L-homocysteine + NH4(+). The catalysed reaction is S-methyl-5'-thioadenosine + H2O + H(+) = S-methyl-5'-thioinosine + NH4(+). It carries out the reaction adenosine + H2O + H(+) = inosine + NH4(+). It participates in amino-acid biosynthesis; S-adenosyl-L-methionine biosynthesis. Functionally, catalyzes the deamination of three SAM-derived enzymatic products, namely 5'-deoxyadenosine, S-adenosyl-L-homocysteine, and 5'-methylthioadenosine, to produce the inosine analogs. Can also deaminate adenosine. The preferred substrate for this enzyme is 5'-deoxyadenosine, but all these substrates are efficiently deaminated. Likely functions in a S-adenosyl-L-methionine (SAM) recycling pathway from S-adenosyl-L-homocysteine (SAH) produced from SAM-dependent methylation reactions. May also be involved in the recycling of 5'-deoxyadenosine, whereupon the 5'-deoxyribose moiety of 5'-deoxyinosine is further metabolized to deoxyhexoses used for the biosynthesis of aromatic amino acids in methanogens. The protein is 5'-deoxyadenosine deaminase of Methanocaldococcus jannaschii (strain ATCC 43067 / DSM 2661 / JAL-1 / JCM 10045 / NBRC 100440) (Methanococcus jannaschii).